We begin with the raw amino-acid sequence, 147 residues long: Ribosome maturation factor RimP (147 aa).

This sequence belongs to the RimP family.

It is found in the cytoplasm. Its function is as follows. Required for maturation of 30S ribosomal subunits. This Legionella pneumophila (strain Paris) protein is Ribosome maturation factor RimP.